The chain runs to 147 residues: Small ribosomal subunit protein eS19 (147 aa).

The protein belongs to the eukaryotic ribosomal protein eS19 family. As to quaternary structure, part of the 30S ribosomal subunit.

Functionally, may be involved in maturation of the 30S ribosomal subunit. The sequence is that of Small ribosomal subunit protein eS19 from Archaeoglobus fulgidus (strain ATCC 49558 / DSM 4304 / JCM 9628 / NBRC 100126 / VC-16).